The primary structure comprises 164 residues: Crossover junction endodeoxyribonuclease RuvC (164 aa).

Catalysis depends on residues Asp7, Glu66, and Asp138. Mg(2+)-binding residues include Asp7, Glu66, and Asp138.

The protein belongs to the RuvC family. In terms of assembly, homodimer which binds Holliday junction (HJ) DNA. The HJ becomes 2-fold symmetrical on binding to RuvC with unstacked arms; it has a different conformation from HJ DNA in complex with RuvA. In the full resolvosome a probable DNA-RuvA(4)-RuvB(12)-RuvC(2) complex forms which resolves the HJ. Mg(2+) serves as cofactor.

Its subcellular location is the cytoplasm. The catalysed reaction is Endonucleolytic cleavage at a junction such as a reciprocal single-stranded crossover between two homologous DNA duplexes (Holliday junction).. In terms of biological role, the RuvA-RuvB-RuvC complex processes Holliday junction (HJ) DNA during genetic recombination and DNA repair. Endonuclease that resolves HJ intermediates. Cleaves cruciform DNA by making single-stranded nicks across the HJ at symmetrical positions within the homologous arms, yielding a 5'-phosphate and a 3'-hydroxyl group; requires a central core of homology in the junction. The consensus cleavage sequence is 5'-(A/T)TT(C/G)-3'. Cleavage occurs on the 3'-side of the TT dinucleotide at the point of strand exchange. HJ branch migration catalyzed by RuvA-RuvB allows RuvC to scan DNA until it finds its consensus sequence, where it cleaves and resolves the cruciform DNA. The polypeptide is Crossover junction endodeoxyribonuclease RuvC (Paracoccus denitrificans (strain Pd 1222)).